The primary structure comprises 617 residues: D-glucuronyl C5-epimerase (617 aa).

Over 1–11 (MRCLAARVNYK) the chain is Cytoplasmic. Residues 12–28 (TLIIICALFTLVTVLLW) form a helical; Signal-anchor for type II membrane protein membrane-spanning segment. Over 29 to 617 (NKCSSDKAIQ…YLKGSRAKHN (589 aa)) the chain is Lumenal. Residues Y179, 184–186 (RDR), Q201, Y209, Q212, and Q215 contribute to the substrate site. 5 residues coordinate Ca(2+): T237, E239, T268, N269, and D392. Substrate contacts are provided by residues 429 to 432 (KLGE), 499 to 500 (EY), N510, Y514, Y560, R563, and 572 to 581 (NLARWDYHTT).

It belongs to the D-glucuronyl C5-epimerase family. As to quaternary structure, homodimer. Interacts with HS2ST1.

Its subcellular location is the golgi apparatus membrane. It catalyses the reaction [heparosan-N-sulfate](n) = [heparan-N-sulfate](n). It participates in glycan metabolism; heparan sulfate biosynthesis. Its pathway is glycan metabolism; heparin biosynthesis. Converts D-glucuronic acid residues adjacent to N-sulfate sugar residues to L-iduronic acid residues, both in maturing heparan sulfate (HS) and heparin chains. This is important for further modifications that determine the specificity of interactions between these glycosaminoglycans and proteins. This is D-glucuronyl C5-epimerase (GLCE) from Bos taurus (Bovine).